The sequence spans 185 residues: Ribosome-recycling factor (185 aa).

The protein belongs to the RRF family.

The protein resides in the cytoplasm. In terms of biological role, responsible for the release of ribosomes from messenger RNA at the termination of protein biosynthesis. May increase the efficiency of translation by recycling ribosomes from one round of translation to another. The chain is Ribosome-recycling factor from Buchnera aphidicola subsp. Acyrthosiphon pisum (strain Tuc7).